A 593-amino-acid chain; its full sequence is NADH-quinone oxidoreductase subunit C/D (593 aa).

Residues 1 to 184 (MTADSVLSIP…DPYSLSAAKQ (184 aa)) are NADH dehydrogenase I subunit C. Residues 208–593 (DFMFLNLGPN…IDFVMADVDR (386 aa)) are NADH dehydrogenase I subunit D.

This sequence in the N-terminal section; belongs to the complex I 30 kDa subunit family. It in the C-terminal section; belongs to the complex I 49 kDa subunit family. In terms of assembly, NDH-1 is composed of 13 different subunits. Subunits NuoB, CD, E, F, and G constitute the peripheral sector of the complex.

The protein localises to the cell inner membrane. It carries out the reaction a quinone + NADH + 5 H(+)(in) = a quinol + NAD(+) + 4 H(+)(out). In terms of biological role, NDH-1 shuttles electrons from NADH, via FMN and iron-sulfur (Fe-S) centers, to quinones in the respiratory chain. The immediate electron acceptor for the enzyme in this species is believed to be ubiquinone. Couples the redox reaction to proton translocation (for every two electrons transferred, four hydrogen ions are translocated across the cytoplasmic membrane), and thus conserves the redox energy in a proton gradient. The protein is NADH-quinone oxidoreductase subunit C/D of Azotobacter vinelandii (strain DJ / ATCC BAA-1303).